Consider the following 259-residue polypeptide: Global transcriptional regulator CodY (259 aa).

The tract at residues 1-155 (MNLLEKTRKI…GATVVGMEIL (155 aa)) is GAF domain. Residues 203–222 (ASKIADRVGITRSVIVNALR) constitute a DNA-binding region (H-T-H motif). Ser215 is modified (phosphoserine).

It belongs to the CodY family.

It is found in the cytoplasm. Functionally, DNA-binding global transcriptional regulator which is involved in the adaptive response to starvation and acts by directly or indirectly controlling the expression of numerous genes in response to nutrient availability. During rapid exponential growth, CodY is highly active and represses genes whose products allow adaptation to nutrient depletion. This chain is Global transcriptional regulator CodY, found in Geobacillus kaustophilus (strain HTA426).